Here is a 232-residue protein sequence, read N- to C-terminus: 7-cyano-7-deazaguanine synthase (232 aa).

8-18 (FSGGQDSTTCL) contacts ATP. Positions 189, 198, 201, and 204 each coordinate Zn(2+).

Belongs to the QueC family. Zn(2+) is required as a cofactor.

The enzyme catalyses 7-carboxy-7-deazaguanine + NH4(+) + ATP = 7-cyano-7-deazaguanine + ADP + phosphate + H2O + H(+). It functions in the pathway purine metabolism; 7-cyano-7-deazaguanine biosynthesis. In terms of biological role, catalyzes the ATP-dependent conversion of 7-carboxy-7-deazaguanine (CDG) to 7-cyano-7-deazaguanine (preQ(0)). The sequence is that of 7-cyano-7-deazaguanine synthase from Yersinia enterocolitica serotype O:8 / biotype 1B (strain NCTC 13174 / 8081).